Reading from the N-terminus, the 360-residue chain is Peptide chain release factor 1 (360 aa).

Position 234 is an N5-methylglutamine (Gln-234). Residues 285-305 (RAQGIAEDRKSQVGTGDRSER) form a disordered region.

This sequence belongs to the prokaryotic/mitochondrial release factor family. Post-translationally, methylated by PrmC. Methylation increases the termination efficiency of RF1.

It localises to the cytoplasm. Functionally, peptide chain release factor 1 directs the termination of translation in response to the peptide chain termination codons UAG and UAA. The protein is Peptide chain release factor 1 of Clostridium beijerinckii (strain ATCC 51743 / NCIMB 8052) (Clostridium acetobutylicum).